Consider the following 302-residue polypeptide: Urease accessory protein UreD 1 (302 aa).

Belongs to the UreD family. UreD, UreF and UreG form a complex that acts as a GTP-hydrolysis-dependent molecular chaperone, activating the urease apoprotein by helping to assemble the nickel containing metallocenter of UreC. The UreE protein probably delivers the nickel.

It localises to the cytoplasm. Required for maturation of urease via the functional incorporation of the urease nickel metallocenter. The polypeptide is Urease accessory protein UreD 1 (Psychrobacter cryohalolentis (strain ATCC BAA-1226 / DSM 17306 / VKM B-2378 / K5)).